The primary structure comprises 122 residues: Aspartate 1-decarboxylase (122 aa).

Catalysis depends on Ser25, which acts as the Schiff-base intermediate with substrate; via pyruvic acid. Ser25 bears the Pyruvic acid (Ser) mark. Thr57 contacts substrate. Tyr58 functions as the Proton donor in the catalytic mechanism. 73 to 75 (GAA) contacts substrate.

This sequence belongs to the PanD family. In terms of assembly, heterooctamer of four alpha and four beta subunits. Requires pyruvate as cofactor. In terms of processing, is synthesized initially as an inactive proenzyme, which is activated by self-cleavage at a specific serine bond to produce a beta-subunit with a hydroxyl group at its C-terminus and an alpha-subunit with a pyruvoyl group at its N-terminus.

The protein localises to the cytoplasm. The catalysed reaction is L-aspartate + H(+) = beta-alanine + CO2. It participates in cofactor biosynthesis; (R)-pantothenate biosynthesis; beta-alanine from L-aspartate: step 1/1. Catalyzes the pyruvoyl-dependent decarboxylation of aspartate to produce beta-alanine. The protein is Aspartate 1-decarboxylase of Bordetella avium (strain 197N).